We begin with the raw amino-acid sequence, 299 residues long: Tryptophan prenyltransferase ComQ (299 aa).

Residues D67 and D71 each coordinate Mg(2+).

It belongs to the FPP/GGPP synthase family. Requires Mg(2+) as cofactor.

The protein localises to the cell membrane. The catalysed reaction is L-tryptophyl-[protein] + (2E,6E)-farnesyl diphosphate = (2S,3R)-3-farnesyl-2,3-dihydro-2,N(alpha)-cyclo-L-tryptophyl-[protein] + diphosphate. Its function is as follows. Part of a major quorum-sensing system that regulates the development of genetic competence. Involved in the maturation of the competence pheromone ComX. Acts by catalyzing the transfer of a farnesyl group on the ComX pheromone. Shows weak geranylation activity with geranyl diphosphate (GPP). The protein is Tryptophan prenyltransferase ComQ of Bacillus subtilis (strain 168).